The following is a 461-amino-acid chain: Phosphomethylpyrimidine synthase (461 aa).

Residues Asn80, Met109, Tyr139, His174, Ser194 to Gly196, Asp235 to Arg238, and Glu274 each bind substrate. Residue His278 coordinates Zn(2+). Substrate is bound at residue Tyr301. Zn(2+) is bound at residue His342. [4Fe-4S] cluster is bound by residues Cys422, Cys425, and Cys430.

Belongs to the ThiC family. Homodimer. [4Fe-4S] cluster is required as a cofactor.

The catalysed reaction is 5-amino-1-(5-phospho-beta-D-ribosyl)imidazole + S-adenosyl-L-methionine = 4-amino-2-methyl-5-(phosphooxymethyl)pyrimidine + CO + 5'-deoxyadenosine + formate + L-methionine + 3 H(+). The protein operates within cofactor biosynthesis; thiamine diphosphate biosynthesis. Catalyzes the synthesis of the hydroxymethylpyrimidine phosphate (HMP-P) moiety of thiamine from aminoimidazole ribotide (AIR) in a radical S-adenosyl-L-methionine (SAM)-dependent reaction. The sequence is that of Phosphomethylpyrimidine synthase from Nautilia profundicola (strain ATCC BAA-1463 / DSM 18972 / AmH).